The chain runs to 161 residues: Regulator of ribonuclease activity A (161 aa).

Belongs to the RraA family. Homotrimer. Binds to both RNA-binding sites in the C-terminal region of Rne and to RhlB.

It is found in the cytoplasm. In terms of biological role, globally modulates RNA abundance by binding to RNase E (Rne) and regulating its endonucleolytic activity. Can modulate Rne action in a substrate-dependent manner by altering the composition of the degradosome. Modulates RNA-binding and helicase activities of the degradosome. The polypeptide is Regulator of ribonuclease activity A (Shigella boydii serotype 18 (strain CDC 3083-94 / BS512)).